A 624-amino-acid chain; its full sequence is uncharacterized protein (624 aa).

The tract at residues 113–249 is disordered; that stretch reads SINVRTSATT…RFHPVTDINK (137 aa). Low complexity predominate over residues 118-225; sequence TSATTTESTN…ATTTESTNAS (108 aa). The span at 226–249 shows a compositional bias: basic and acidic residues; that stretch reads AKEDANKDGNAEDNRFHPVTDINK.

This is an uncharacterized protein from Saccharomyces cerevisiae (strain ATCC 204508 / S288c) (Baker's yeast).